The sequence spans 331 residues: Ferredoxin--NADP reductase (331 aa).

Positions 34, 42, 47, 87, 120, 285, and 325 each coordinate FAD.

This sequence belongs to the ferredoxin--NADP reductase type 2 family. In terms of assembly, homodimer. FAD is required as a cofactor.

It catalyses the reaction 2 reduced [2Fe-2S]-[ferredoxin] + NADP(+) + H(+) = 2 oxidized [2Fe-2S]-[ferredoxin] + NADPH. The chain is Ferredoxin--NADP reductase from Levilactobacillus brevis (strain ATCC 367 / BCRC 12310 / CIP 105137 / JCM 1170 / LMG 11437 / NCIMB 947 / NCTC 947) (Lactobacillus brevis).